Consider the following 107-residue polypeptide: Nucleoid-associated protein Pnuc_0701 (107 aa).

This sequence belongs to the YbaB/EbfC family. As to quaternary structure, homodimer.

The protein localises to the cytoplasm. Its subcellular location is the nucleoid. Its function is as follows. Binds to DNA and alters its conformation. May be involved in regulation of gene expression, nucleoid organization and DNA protection. This Polynucleobacter asymbioticus (strain DSM 18221 / CIP 109841 / QLW-P1DMWA-1) (Polynucleobacter necessarius subsp. asymbioticus) protein is Nucleoid-associated protein Pnuc_0701.